A 423-amino-acid chain; its full sequence is Replication factor C large subunit (423 aa).

Residue G50–T57 participates in ATP binding.

It belongs to the activator 1 small subunits family. RfcL subfamily. Heteromultimer composed of small subunits (RfcS) and large subunits (RfcL).

Part of the RFC clamp loader complex which loads the PCNA sliding clamp onto DNA. The polypeptide is Replication factor C large subunit (Staphylothermus marinus (strain ATCC 43588 / DSM 3639 / JCM 9404 / F1)).